Consider the following 135-residue polypeptide: Retinol-binding protein 5 (135 aa).

This sequence belongs to the calycin superfamily. Fatty-acid binding protein (FABP) family. Kidney.

It is found in the cytoplasm. Intracellular transport of retinol. The chain is Retinol-binding protein 5 (RBP5) from Bos taurus (Bovine).